Consider the following 129-residue polypeptide: Biogenesis of lysosome-related organelles complex 1 subunit CNL1 (129 aa).

Belongs to the BLOC1S4 family. Component of the biogenesis of lysosome-related organelles complex-1 (BLOC-1).

It is found in the cytoplasm. In terms of biological role, component of the biogenesis of lysosome-related organelles complex-1 (BLOC-1), a complex that is involved in endosomal cargo sorting. The sequence is that of Biogenesis of lysosome-related organelles complex 1 subunit CNL1 (CLN1) from Eremothecium gossypii (strain ATCC 10895 / CBS 109.51 / FGSC 9923 / NRRL Y-1056) (Yeast).